The chain runs to 829 residues: Probable methyltransferase PMT26 (829 aa).

At 1 to 17 (MAQPRYTRIDNRRPSSN) the chain is on the cytoplasmic side. Residues 18-38 (YCSTVTVVVFVALCLVGIWMM) traverse the membrane as a helical; Signal-anchor for type II membrane protein segment. The Lumenal segment spans residues 39 to 829 (TSSSVGPAQN…EVETLTYAIG (791 aa)). The disordered stretch occupies residues 55–258 (DNKDGIKKQM…TSGDLSPPGA (204 aa)). Composition is skewed to basic and acidic residues over residues 85-143 (NEDK…DSKS), 151-160 (LDEKKDLKDN), 168-177 (TNEKQTKPET), and 187-231 (ENQK…KENT). Asn215, Asn247, Asn264, and Asn270 each carry an N-linked (GlcNAc...) asparagine glycan. The segment covering 241–252 (QEGQSKNETSGD) has biased composition (polar residues). Residues 271-291 (GSFSTQATESKNEKEAQKGSG) are disordered. Positions 280–291 (SKNEKEAQKGSG) are enriched in basic and acidic residues. N-linked (GlcNAc...) asparagine glycosylation is found at Asn302, Asn579, Asn595, and Asn756.

The protein belongs to the methyltransferase superfamily.

It is found in the golgi apparatus membrane. The protein is Probable methyltransferase PMT26 of Arabidopsis thaliana (Mouse-ear cress).